The sequence spans 184 residues: Ribulose bisphosphate carboxylase small subunit, chloroplastic 2 (184 aa).

A chloroplast-targeting transit peptide spans 1–59 (MASSMMSNAATAVAVAATSGGAQANMVAPFNGLKSIASFPVTRKSNDITSIASNGGRVQ).

This sequence belongs to the RuBisCO small chain family. Heterohexadecamer of 8 large and 8 small subunits.

Its subcellular location is the plastid. The protein localises to the chloroplast. Functionally, ruBisCO catalyzes two reactions: the carboxylation of D-ribulose 1,5-bisphosphate, the primary event in carbon dioxide fixation, as well as the oxidative fragmentation of the pentose substrate. Both reactions occur simultaneously and in competition at the same active site. Although the small subunit is not catalytic it is essential for maximal activity. In Amaranthus hypochondriacus (Prince-of-Wales feather), this protein is Ribulose bisphosphate carboxylase small subunit, chloroplastic 2.